The sequence spans 164 residues: Ecotin (164 aa).

Residues 1-20 (MKMFVPAVVFAALASASAWA) form the signal peptide. Residues Cys72 and Cys109 are joined by a disulfide bond.

Belongs to the protease inhibitor I11 (ecotin) family. In terms of assembly, homodimer.

It is found in the periplasm. General inhibitor of pancreatic serine proteases: inhibits chymotrypsin, trypsin, elastases, factor X, kallikrein as well as a variety of other proteases. This is Ecotin from Salmonella enteritidis PT4 (strain P125109).